The primary structure comprises 200 residues: dITP/XTP pyrophosphatase (200 aa).

8 to 13 (THNPNK) contacts substrate. The Mg(2+) site is built by glutamate 41 and aspartate 71. The active-site Proton acceptor is aspartate 71. Residues threonine 72, 153–156 (FGYD), lysine 176, and 181–182 (HR) each bind substrate.

The protein belongs to the HAM1 NTPase family. Homodimer. Mg(2+) serves as cofactor.

The catalysed reaction is XTP + H2O = XMP + diphosphate + H(+). It catalyses the reaction dITP + H2O = dIMP + diphosphate + H(+). The enzyme catalyses ITP + H2O = IMP + diphosphate + H(+). Its function is as follows. Pyrophosphatase that catalyzes the hydrolysis of nucleoside triphosphates to their monophosphate derivatives, with a high preference for the non-canonical purine nucleotides XTP (xanthosine triphosphate), dITP (deoxyinosine triphosphate) and ITP. Seems to function as a house-cleaning enzyme that removes non-canonical purine nucleotides from the nucleotide pool, thus preventing their incorporation into DNA/RNA and avoiding chromosomal lesions. This Caldanaerobacter subterraneus subsp. tengcongensis (strain DSM 15242 / JCM 11007 / NBRC 100824 / MB4) (Thermoanaerobacter tengcongensis) protein is dITP/XTP pyrophosphatase.